Reading from the N-terminus, the 658-residue chain is MRGCLQTVRWLTSAWQRPPSYPPLSRAAPCRFFNVSIPRNAQSRKPVSDLERRIAAIPIDRFRNFCIVAHVDHGKSTLSDRLLELTGTIQPGGNKQVLDKLDVERERGITVKAQTCTMLYNYRGEDYLLHLVDTPGHVDFRAEVSRSYASCGGALLLVDASQGVQAQTVANFYLAFAEGLKLVPVINKVDLPSADPVRALDQMANTFELDPKTAVLVSAKTGLNVEQLLPTVVEQIPAPVGDHTKPLRMLLVDSWYSTYKGVILLVRIFDGEVRAGDHVGSLATGLKYHVGEVGIMYPGQTAQSVLRAGQVGYIYFNPAMKRSQEAKVGDTYTKVGSEKLIEPLPGFEEPKSMVFVAAYPVDASDFPHLEDSINQLLLNDRSITLQKESSEALGAGFRLGFLGTLHCSVFEDRLRQEHGASIIITPPTVPFKVIWKDGKEEIITNPALFPEEDALRAKVVELQEPFVLATLTFPEEYLGRVIELCESNRGEQKSLEFFTATQVILKYELPLAQLVDDFFGKLKGSTKGYASLDYEESGWRRSSIAKLQLLVNKVPVDAVSRVVHSSQVQKLGRVWVSKFKEHVDRQMFEVVIQAAVGRNIVARETIKPFRKDVLQKLHAADVTRRRKLLEKQKEGRKKLKAVGNVVIEHKAFQAFLAK.

The N-terminal 40 residues, 1–40, are a transit peptide targeting the mitochondrion; the sequence is MRGCLQTVRWLTSAWQRPPSYPPLSRAAPCRFFNVSIPRN. Residues 60–240 enclose the tr-type G domain; that stretch reads DRFRNFCIVA…TVVEQIPAPV (181 aa). Residues 69 to 76, 133 to 137, and 187 to 190 each bind GTP; these read AHVDHGKS, DTPGH, and NKVD.

It belongs to the TRAFAC class translation factor GTPase superfamily. Classic translation factor GTPase family. LepA subfamily.

It is found in the mitochondrion inner membrane. The enzyme catalyses GTP + H2O = GDP + phosphate + H(+). Promotes mitochondrial protein synthesis. May act as a fidelity factor of the translation reaction, by catalyzing a one-codon backward translocation of tRNAs on improperly translocated ribosomes. Binds to mitochondrial ribosomes in a GTP-dependent manner. This Paracoccidioides brasiliensis (strain Pb03) protein is Translation factor GUF1, mitochondrial.